A 346-amino-acid polypeptide reads, in one-letter code: Fusaric acid resistance protein FusC (346 aa).

Helical transmembrane passes span 10 to 30 (VIIG…RYTG), 248 to 268 (VILA…VMLV), 291 to 311 (MGMG…GIYP), and 315 to 335 (GFVL…YMSL).

Belongs to the aromatic acid exporter ArAE (TC 2.A.85) family.

It localises to the cell membrane. Involved in the resistance (detoxification) of the fungal toxin fusaric acid. This Burkholderia cepacia (Pseudomonas cepacia) protein is Fusaric acid resistance protein FusC (fusC).